The following is a 977-amino-acid chain: Mast/stem cell growth factor receptor Kit (977 aa).

The first 25 residues, M1–S25, serve as a signal peptide directing secretion. The Extracellular portion of the chain corresponds to Q26–P525. Ig-like C2-type domains are found at residues P27–R112, D121–R205, P212–V309, P318–N411, and P414–A508. C58 and C97 form a disulfide bridge. 3 N-linked (GlcNAc...) asparagine glycosylation sites follow: N94, N130, and N145. Cystine bridges form between C136-C186, C151-C183, and C233-C291. Residues N284, N294, N301, N321, N353, N368, N401, N464, and N487 are each glycosylated (N-linked (GlcNAc...) asparagine). C429 and C492 form a disulfide bridge. The chain crosses the membrane as a helical span at residues L526–Y546. The Cytoplasmic segment spans residues K547–V977. Phosphotyrosine is present on residues Y548 and Y554. Mg(2+) is bound at residue Y569. A phosphotyrosine; by autocatalysis mark is found at Y569 and Y571. Residues Y569–Y571 are important for interaction with phosphotyrosine-binding proteins. In terms of domain architecture, Protein kinase spans L590 to S938. ATP is bound by residues G597 to V604, K624, and E672 to D678. Y704 and Y722 each carry phosphotyrosine; by autocatalysis. A Phosphotyrosine modification is found at Y731. Phosphoserine; by PKC/PRKCA is present on residues S742 and S747. The active-site Proton acceptor is the D793. R797 is an ATP binding site. Residues N798 and D811 each coordinate Mg(2+). A Phosphoserine modification is found at S822. Y824 is modified (phosphotyrosine; by autocatalysis). S892 carries the post-translational modification Phosphoserine. The residue at position 901 (Y901) is a Phosphotyrosine. Y937 is subject to Phosphotyrosine; by autocatalysis. S960 bears the Phosphoserine mark.

The protein belongs to the protein kinase superfamily. Tyr protein kinase family. CSF-1/PDGF receptor subfamily. In terms of assembly, monomer in the absence of bound KITLG/SCF. Homodimer in the presence of bound KITLG/SCF, forming a heterotetramer with two KITLG/SCF molecules. Interacts (via phosphorylated tyrosine residues) with the adapter proteins GRB2 and GRB7 (via SH2 domain), and SH2B2/APS. Interacts (via C-terminus) with MPDZ (via the tenth PDZ domain). Interacts (via phosphorylated tyrosine residues) with PIK3R1 and PIK3CD. Interacts (via phosphorylated tyrosine) with CRK (isoform Crk-II), FYN, SHC1 and MATK/CHK (via SH2 domain). Interacts with LYN and FES/FPS. Interacts (via phosphorylated tyrosine residues) with the protein phosphatases PTPN6/SHP-1 (via SH2 domain), PTPN11/SHP-2 (via SH2 domain) and PTPRU. Interacts with PLCG1. Interacts with DOK1 and TEC. Interacts with IL1RAP (independent of stimulation with KITLG/SCF). A mast cell-specific KITLG/SCF-induced interleukin-33 signaling complex contains IL1RL1, IL1RAP, KIT and MYD88. Post-translationally, ubiquitinated by SOCS6. KIT is rapidly ubiquitinated after autophosphorylation induced by KITLG/SCF binding, leading to internalization and degradation. In terms of processing, autophosphorylated on tyrosine residues. KITLG/SCF binding promotes autophosphorylation. Phosphorylated tyrosine residues are important for interaction with specific binding partners.

It is found in the cell membrane. The catalysed reaction is L-tyrosyl-[protein] + ATP = O-phospho-L-tyrosyl-[protein] + ADP + H(+). With respect to regulation, present in an inactive conformation in the absence of bound ligand. KITLG/SCF binding leads to dimerization and activation by autophosphorylation on tyrosine residues. Activity is down-regulated by PRKCA-mediated phosphorylation on serine residues. Tyrosine-protein kinase that acts as a cell-surface receptor for the cytokine KITLG/SCF and plays an essential role in the regulation of cell survival and proliferation, hematopoiesis, stem cell maintenance, gametogenesis, mast cell development, migration and function, and in melanogenesis. In response to KITLG/SCF binding, KIT can activate several signaling pathways. Phosphorylates PIK3R1, PLCG1, SH2B2/APS and CBL. Activates the AKT1 signaling pathway by phosphorylation of PIK3R1, the regulatory subunit of phosphatidylinositol 3-kinase. Activated KIT also transmits signals via GRB2 and activation of RAS, RAF1 and the MAP kinases MAPK1/ERK2 and/or MAPK3/ERK1. Promotes activation of STAT family members STAT1, STAT3, STAT5A and STAT5B. Activation of PLCG1 leads to the production of the cellular signaling molecules diacylglycerol and inositol 1,4,5-trisphosphate. KIT signaling is modulated by protein phosphatases, and by rapid internalization and degradation of the receptor. Activated KIT promotes phosphorylation of the protein phosphatases PTPN6/SHP-1 and PTPRU, and of the transcription factors STAT1, STAT3, STAT5A and STAT5B. Promotes phosphorylation of PIK3R1, CBL, CRK (isoform Crk-II), LYN, MAPK1/ERK2 and/or MAPK3/ERK1, PLCG1, SRC and SHC1. This chain is Mast/stem cell growth factor receptor Kit (KIT), found in Bos taurus (Bovine).